The following is a 361-amino-acid chain: Velvet complex subunit B (361 aa).

The 336-residue stretch at 1-336 folds into the Velvet domain; the sequence is MIVRTEDQKL…GNQGQKLPLR (336 aa). Disordered regions lie at residues 42–222 and 327–361; these read PSST…NNIP and GNQG…EDDS. Low complexity-rich tracts occupy residues 57–74 and 93–107; these read PSAS…SRPP and PPSS…SQSQ. Residues 108 to 127 show a composition bias toward polar residues; it reads DNLTPSSPYPPHSNSEQPQT. The span at 130-147 shows a compositional bias: pro residues; it reads YPPPPPIDRAAPFPPPVL. 3 stretches are compositionally biased toward polar residues: residues 149 to 168, 181 to 196, and 212 to 222; these read SIQS…NNDD, GYTN…YGSG, and SGNATPQNNIP. Basic residues predominate over residues 335–349; sequence LRNRHGTGSKRRRRN.

This sequence belongs to the velvet family. VelB subfamily. Component of the heterotrimeric velvet complex composed of laeA, veA and velB; VeA acting as a bridging protein between laeA and velB. Forms a heterodimeric complex with vosA; the formation of the velB-vosA complex is light-dependent.

It is found in the nucleus. The protein localises to the cytoplasm. Functionally, component of the velvet transcription factor complex that controls sexual/asexual developmental ratio in response to light, promoting sexual development in the darkness while stimulating asexual sporulation under illumination. The velvet complex acts as a global regulator for secondary metabolite gene expression. Component of the velB-VosA heterodimeric complex that plays a dual role in activating genes associated with spore maturation and repressing certain development-associated genes. The velB-VosA complex binds DNA through the DNA-binding domain of vosA that recognizes an 11-nucleotide consensus sequence 5'-CTGGCCGCGGC-3' consisting of two motifs in the promoters of key developmental regulatory genes. This is Velvet complex subunit B from Coprinopsis cinerea (strain Okayama-7 / 130 / ATCC MYA-4618 / FGSC 9003) (Inky cap fungus).